Reading from the N-terminus, the 76-residue chain is Vasotab-TY1 (76 aa).

The signal sequence occupies residues 1 to 21 (MKFTLFSVLVVLLIATFVAAD). Residues 22–76 (DCPRICTADFRPVCGTPSGGRRSANRTFGNQCSLDSHNCLNKGDTYDKLHDGECK) form the Kazal-like domain. 3 disulfides stabilise this stretch: Cys23–Cys60, Cys27–Cys53, and Cys35–Cys75.

In terms of tissue distribution, expressed by the salivary gland.

It localises to the secreted. In terms of biological role, vasodilator protein that inhibits vasoconstriction of isolated rat femoral artery induced by phenylephrine. Since platelet aggregation and vasoconstriction are key hemostatic responses, particularly in small wounds, this protein likely participates in the antihemostatic responses during blood feeding. Blocks L-type calcium channels (Cav1/CACNA1) in left ventricular myocytes isolated from rat hearts. The protein is Vasotab-TY1 of Tabanus yao (Horsefly).